Consider the following 452-residue polypeptide: Phosphoglucosamine mutase (452 aa).

Ser-109 (phosphoserine intermediate) is an active-site residue. The Mg(2+) site is built by Ser-109, Asp-248, Asp-250, and Asp-252. Ser-109 carries the phosphoserine modification.

The protein belongs to the phosphohexose mutase family. Mg(2+) is required as a cofactor. Activated by phosphorylation.

The enzyme catalyses alpha-D-glucosamine 1-phosphate = D-glucosamine 6-phosphate. Functionally, catalyzes the conversion of glucosamine-6-phosphate to glucosamine-1-phosphate. The chain is Phosphoglucosamine mutase from Erythrobacter litoralis (strain HTCC2594).